We begin with the raw amino-acid sequence, 205 residues long: 3-demethoxyubiquinol 3-hydroxylase (205 aa).

Positions 54, 84, 87, 136, 168, and 171 each coordinate Fe cation.

It belongs to the COQ7 family. Fe cation is required as a cofactor.

The protein resides in the cell membrane. It catalyses the reaction a 5-methoxy-2-methyl-3-(all-trans-polyprenyl)benzene-1,4-diol + AH2 + O2 = a 3-demethylubiquinol + A + H2O. It participates in cofactor biosynthesis; ubiquinone biosynthesis. Functionally, catalyzes the hydroxylation of 2-nonaprenyl-3-methyl-6-methoxy-1,4-benzoquinol during ubiquinone biosynthesis. This Delftia acidovorans (strain DSM 14801 / SPH-1) protein is 3-demethoxyubiquinol 3-hydroxylase.